The sequence spans 709 residues: Leucine-rich repeat-containing protein 4B (709 aa).

An N-terminal signal peptide occupies residues 1 to 38 (MAQAHIRGSPCPLLPPGRMSWPHGALLLLWLFSPPLRA). Positions 50 to 88 (GGGSPPATSCPAACSCSNQASRVICTRRELAEVPASIPV) constitute an LRRNT domain. 9 LRR repeats span residues 89–110 (NTRY…TFKH), 113–134 (HLEI…AFNG), 137–158 (SLNT…AFEY), 161–182 (KLRE…AFNR), 185–207 (SLRR…AFEG), 210–231 (NLRY…TALV), 232–253 (RLEE…SFQG), 256–277 (SLRK…AFDD), and 280–301 (SLEE…LFTP). Asn226 carries N-linked (GlcNAc...) asparagine glycosylation. 8 N-linked (GlcNAc...) asparagine glycosylation sites follow: Asn285, Asn335, Asn376, Asn402, Asn424, Asn427, Asn446, and Asn454. The 53-residue stretch at 313 to 365 (NPWHCNCDVLWLSWWLKETVPSNTTCCARCHAPAGLKGRYIGELDQSHFTCYA) folds into the LRRCT domain. Residues 366–454 (PVIVEPPTDL…GNTTASATLN (89 aa)) enclose the Ig-like C2-type domain. An intrachain disulfide couples Cys387 to Cys438. A disordered region spans residues 496–552 (TQPGEEAQQPRGTEKEPPGPTTDGAWGGGRPDAAAPASASTTAPAPRSSRPTEKAFT). The span at 528–544 (AAAPASASTTAPAPRSS) shows a compositional bias: low complexity. The helical transmembrane segment at 575 to 595 (IIIGCFVAITFMAAVMLVAFY) threads the bilayer. The residue at position 689 (Ser689) is a Phosphoserine.

In terms of assembly, interacts with PTPRF. Interacts with DLG4. Post-translationally, N-glycosylated. O-glycosylated; contains sialic acid.

The protein localises to the membrane. The protein resides in the presynaptic cell membrane. Its function is as follows. Synaptic adhesion protein. Regulates the formation of excitatory synapses. The trans-synaptic adhesion between LRRC4B and PTPRF regulates the formation of excitatory synapses in a bidirectional manner. The protein is Leucine-rich repeat-containing protein 4B (Lrrc4b) of Mus musculus (Mouse).